A 127-amino-acid chain; its full sequence is Large ribosomal subunit protein bL12 (127 aa).

Positions 98-127 are disordered; that stretch reads PKPIKEGAPKAEAESLKSKLEEAGAEVELK.

This sequence belongs to the bacterial ribosomal protein bL12 family. In terms of assembly, homodimer. Part of the ribosomal stalk of the 50S ribosomal subunit. Forms a multimeric L10(L12)X complex, where L10 forms an elongated spine to which 2 to 4 L12 dimers bind in a sequential fashion. Binds GTP-bound translation factors.

Forms part of the ribosomal stalk which helps the ribosome interact with GTP-bound translation factors. Is thus essential for accurate translation. This is Large ribosomal subunit protein bL12 from Amoebophilus asiaticus (strain 5a2).